The following is a 64-amino-acid chain: MAGHKVAHATLKGPSVVKELIIGLTLGLAAGGLWKMHHWNEQRKTRTFYDLLERGEIGVVASEE.

A helical transmembrane segment spans residues 15–34 (SVVKELIIGLTLGLAAGGLW).

This sequence belongs to the cytochrome c oxidase subunit 5C family.

It localises to the mitochondrion inner membrane. In terms of biological role, this protein is one of the nuclear-coded polypeptide chains of cytochrome c oxidase, the terminal oxidase in mitochondrial electron transport. The sequence is that of Cytochrome c oxidase subunit 5C-2 from Arabidopsis thaliana (Mouse-ear cress).